Reading from the N-terminus, the 129-residue chain is MASRLLRGAGTLAAQALRARGPSGAAAMRSMASGGGVPTDEEQATGLEREIMLAAKKGLDPYNVLAPKGASGTREDPNLVPSISNKRIVGCICEEDNTSVVWFWLHKGEAQRCPRCGAHYKLVPQQLAH.

The transit peptide at 1–31 (MASRLLRGAGTLAAQALRARGPSGAAAMRSM) directs the protein to the mitochondrion. N6-acetyllysine is present on residues Lys68 and Lys86. Positions 91, 93, 113, and 116 each coordinate Zn(2+). Lys121 carries the N6-acetyllysine modification.

It belongs to the cytochrome c oxidase subunit 5B family. Component of the cytochrome c oxidase (complex IV, CIV), a multisubunit enzyme composed of 14 subunits. The complex is composed of a catalytic core of 3 subunits MT-CO1, MT-CO2 and MT-CO3, encoded in the mitochondrial DNA, and 11 supernumerary subunits COX4I1 (or COX4I2), COX5A, COX5B, COX6A1 (or COX6A2), COX6B1 (or COX6B2), COX6C, COX7A2 (or COX7A1), COX7B, COX7C, COX8A and NDUFA4, which are encoded in the nuclear genome. The complex exists as a monomer or a dimer and forms supercomplexes (SCs) in the inner mitochondrial membrane with NADH-ubiquinone oxidoreductase (complex I, CI) and ubiquinol-cytochrome c oxidoreductase (cytochrome b-c1 complex, complex III, CIII), resulting in different assemblies (supercomplex SCI(1)III(2)IV(1) and megacomplex MCI(2)III(2)IV(2)).

The protein localises to the mitochondrion inner membrane. It participates in energy metabolism; oxidative phosphorylation. Its function is as follows. Component of the cytochrome c oxidase, the last enzyme in the mitochondrial electron transport chain which drives oxidative phosphorylation. The respiratory chain contains 3 multisubunit complexes succinate dehydrogenase (complex II, CII), ubiquinol-cytochrome c oxidoreductase (cytochrome b-c1 complex, complex III, CIII) and cytochrome c oxidase (complex IV, CIV), that cooperate to transfer electrons derived from NADH and succinate to molecular oxygen, creating an electrochemical gradient over the inner membrane that drives transmembrane transport and the ATP synthase. Cytochrome c oxidase is the component of the respiratory chain that catalyzes the reduction of oxygen to water. Electrons originating from reduced cytochrome c in the intermembrane space (IMS) are transferred via the dinuclear copper A center (CU(A)) of subunit 2 and heme A of subunit 1 to the active site in subunit 1, a binuclear center (BNC) formed by heme A3 and copper B (CU(B)). The BNC reduces molecular oxygen to 2 water molecules using 4 electrons from cytochrome c in the IMS and 4 protons from the mitochondrial matrix. The protein is Cytochrome c oxidase subunit 5B, mitochondrial (COX5B) of Homo sapiens (Human).